The sequence spans 183 residues: Adenine phosphoribosyltransferase (183 aa).

It belongs to the purine/pyrimidine phosphoribosyltransferase family. In terms of assembly, homodimer.

The protein resides in the cytoplasm. It catalyses the reaction AMP + diphosphate = 5-phospho-alpha-D-ribose 1-diphosphate + adenine. It functions in the pathway purine metabolism; AMP biosynthesis via salvage pathway; AMP from adenine: step 1/1. Functionally, catalyzes a salvage reaction resulting in the formation of AMP, that is energically less costly than de novo synthesis. The protein is Adenine phosphoribosyltransferase of Shewanella halifaxensis (strain HAW-EB4).